Consider the following 148-residue polypeptide: Fibroblast growth factor 1 (148 aa).

The propeptide occupies 1-11; that stretch reads EITTFAALTER. Asparagine 29 serves as a coordination point for heparin. The tract at residues 123–139 is heparin-binding; sequence KKNGKTKLGSRTHFGQK.

The protein belongs to the heparin-binding growth factors family.

It localises to the secreted. It is found in the cytoplasm. Its subcellular location is the cell cortex. The protein localises to the cytosol. The protein resides in the nucleus. Functionally, plays an important role in the regulation of cell survival, cell division, angiogenesis, cell differentiation and cell migration. Functions as a potent mitogen in vitro. Acts as a ligand for FGFR1 and integrins. Binds to FGFR1 in the presence of heparin leading to FGFR1 dimerization and activation via sequential autophosphorylation on tyrosine residues which act as docking sites for interacting proteins, leading to the activation of several signaling cascades. Binds to integrins. Its binding to integrins and subsequent ternary complex formation with integrins and FGFR1 are essential for FGF1 signaling. In Cynops pyrrhogaster (Japanese fire-bellied newt), this protein is Fibroblast growth factor 1 (fgf1).